Reading from the N-terminus, the 264-residue chain is Synaptophysin-like protein 2 (264 aa).

The Cytoplasmic segment spans residues 1–33 (MSSTESPGRTSDKSPRQQVDRLLLGLRWQRLEE). The MARVEL domain maps to 30–238 (RLEEPLGFIK…NCWFVFKETP (209 aa)). Residues 34 to 54 (PLGFIKVLQWLFAIFAFGSCG) traverse the membrane as a helical segment. Residues 55–116 (SYSGETGALV…LMGDFSAPAE (62 aa)) lie on the Vesicular side of the membrane. A helical transmembrane segment spans residues 117-137 (FFVTLGIFSFFYTMAALVIYL). Topologically, residues 138 to 150 (RFHKLYTENKRFP) are cytoplasmic. A helical transmembrane segment spans residues 151–171 (LVDFCVTVSFTFFWLVAAAAW). At 172 to 213 (GKGLTDVKGATRPSSLTAAMSVCHGEEAVCSAGATPSMGLAN) the chain is on the vesicular side. Residue Asn-213 is glycosylated (N-linked (GlcNAc...) asparagine). A helical transmembrane segment spans residues 214–234 (LSVLFGFINFFLWAGNCWFVF). Topologically, residues 235–264 (KETPWHGQGQDQGQGPSQESAAEQGAVEKQ) are cytoplasmic. The tract at residues 242 to 264 (QGQDQGQGPSQESAAEQGAVEKQ) is disordered.

The protein belongs to the synaptophysin/synaptobrevin family. As to expression, expressed abundantly in skeletal muscle and at lower levels in the kidney.

Its subcellular location is the membrane. Its function is as follows. Involved in communication between the T-tubular and junctional sarcoplasmic reticulum (SR) membranes. The chain is Synaptophysin-like protein 2 (Sypl2) from Mus musculus (Mouse).